Here is a 674-residue protein sequence, read N- to C-terminus: DNA mismatch repair protein MutL (674 aa).

It belongs to the DNA mismatch repair MutL/HexB family.

Its function is as follows. This protein is involved in the repair of mismatches in DNA. It is required for dam-dependent methyl-directed DNA mismatch repair. May act as a 'molecular matchmaker', a protein that promotes the formation of a stable complex between two or more DNA-binding proteins in an ATP-dependent manner without itself being part of a final effector complex. The polypeptide is DNA mismatch repair protein MutL (Clostridium perfringens (strain 13 / Type A)).